The sequence spans 207 residues: Large ribosomal subunit protein bL25 (207 aa).

It belongs to the bacterial ribosomal protein bL25 family. CTC subfamily. As to quaternary structure, part of the 50S ribosomal subunit; part of the 5S rRNA/L5/L18/L25 subcomplex. Contacts the 5S rRNA. Binds to the 5S rRNA independently of L5 and L18.

In terms of biological role, this is one of the proteins that binds to the 5S RNA in the ribosome where it forms part of the central protuberance. The sequence is that of Large ribosomal subunit protein bL25 from Brucella abortus (strain S19).